Here is a 1348-residue protein sequence, read N- to C-terminus: MRSPRTFTFYFLLLVICSSEAALSTPTEPIVQPSILQEHELAGEELLRPKRAAAAGDRVAEEYMVDIEISFENVSFLESIRAHLNNLSFPIRGTEADILNIAMTTVCTPAGNDLLCFCEKGYQWSEERCLHSLTCQDYDSALPGGYCSCLKGLPPQGPFCQLPEAFITLKLKVRLNIGFQEDLKNTSSALYRSYKTDLERAFRAGYRTLPGFRSVTVTQFTKGSVVVNYVVRVTSAPLPGSIHKANEQVIQNLNHTYKMDYNSFQGTPSNETKFTVIPEFIFEGDNVTLECETEFVTSNTSWYYGEKRSDIQNSDKYSIHTTVINNISLITRLTIYNFTQHDAGMYGCNVTLDIFEYGTVRKLDVTPIRILAKEERKVVCDNHPISLNCCSENIANWSSIEWKQEGKISILGNPESDLESSCSTYTLKADGTQCPSGSSGTTVIYTCEFVSAYGARGSKNIAVTFTSVANLTITRDPISVSEGQSFSITCLSDVSSFDEVYWNTSAGIKIHPRFYTMRRYQDGAESVLMVKTSTREWNGTYHCIFRYKNSYSIATKDVTVHPLPLVSDIMMDPLEASGLCTSSHQFKCCVEEDAGEEYAVTFHVDSSSFPAEREVIGKQACYTYSLPANLPRCPKDIAVFCHFTNAANSSVRSPSMKLKLIPRENVTCQDPIIGIGDPGKVIQKLCQFSGVYGSPGQAIGGTVTYKCVGTQWKEESRACISAPINGLLQVAKALIKSPTQDQKLPTYLRDLSVSAGKEEQDIRSSPGSLGAIISILDLLSTVPTQVNSEMMRDILATINVILDKSALNSWEKLLQQQSNQSSQFLHSVERFSQALQLGDSTPPFLAHPNVQMKSMVIKRGHPQIYQQQFIFKDSDLWGDVAIDECQLGNLQPDSSIVTVAFPTLKAILAQDVQRKTSSNSLVMTTTVSHNIVKPFRISMTFKNNHRSGGKPQCVFWNFSLANNTGGWDSSGCSVEDDGRDNRDRVFCKCNHLTSFSILMSPDSPDPGSLLKILLDIISYIGLGFSIVSLAACLVVEAMVWKSVTKNRTSYMRHICIVNIAFCLLIADIWFIVAGAIHDGRYPLNETACVAATFFIHFFYLSVFFWMLTLGLMLFYRLIFILHDASKSTQKAIAFSLGYGCPLIISSITVGVTQPQEVYMRKNACWLNWEDTRALLAFAIPALIIVVVNVSITVVVITKILRPSIGDKPGKQEKSSLFQISKSIGVLTPLLGLTWGFGLATVIQGSNAVFHIIFTLLNAFQGLFILLFGCLWDQKVQEALLHKFSLSRWSSQHSKSTSIGSSTPVFSMSSPISRRFNNLFGKTGTYNVSTPETTSSSLENSSSAYSLLN.

The signal sequence occupies residues methionine 1–alanine 21. The Extracellular segment spans residues alanine 22–tyrosine 1019. An SEA domain is found at proline 163–glutamate 271. Ig-like domains follow at residues proline 268–threonine 366, proline 367–threonine 464, and alanine 469–threonine 559. N-linked (GlcNAc...) asparagine glycans are attached at residues asparagine 270, asparagine 286, asparagine 337, and asparagine 349. Cysteine 291 and cysteine 348 are disulfide-bonded. Cysteine 389 and cysteine 447 are disulfide-bonded. Residues asparagine 470, asparagine 538, and asparagine 665 are each glycosylated (N-linked (GlcNAc...) asparagine). The cysteines at positions 490 and 543 are disulfide-linked. Serine 818 is subject to Phosphoserine. In terms of domain architecture, GAIN-B spans threonine 841 to aspartate 1005. 2 disulfide bridges follow: cysteine 953/cysteine 987 and cysteine 972/cysteine 989. The segment at cysteine 953–aspartate 1005 is GPS. Residues threonine 993 to serine 1008 form a tethered agonist region. The chain crosses the membrane as a helical span at residues isoleucine 1020–tryptophan 1040. At lysine 1041–cysteine 1055 the chain is on the cytoplasmic side. The helical transmembrane segment at isoleucine 1056–isoleucine 1076 threads the bilayer. At histidine 1077–threonine 1092 the chain is on the extracellular side. Residues phenylalanine 1093–leucine 1113 traverse the membrane as a helical segment. The Cytoplasmic portion of the chain corresponds to phenylalanine 1114–lysine 1130. The helical transmembrane segment at alanine 1131–valine 1151 threads the bilayer. Residues threonine 1152–leucine 1175 are Extracellular-facing. The chain crosses the membrane as a helical span at residues alanine 1176–isoleucine 1196. Residues threonine 1197 to lysine 1221 lie on the Cytoplasmic side of the membrane. The helical transmembrane segment at serine 1222–isoleucine 1242 threads the bilayer. Over glutamine 1243 to histidine 1250 the chain is Extracellular. A helical membrane pass occupies residues isoleucine 1251–tryptophan 1271. Residues aspartate 1272 to asparagine 1348 are Cytoplasmic-facing. The residue at position 1302 (threonine 1302) is a Phosphothreonine. A Phosphoserine modification is found at serine 1309. The interval serine 1328 to asparagine 1348 is disordered.

The protein belongs to the G-protein coupled receptor 2 family. Adhesion G-protein coupled receptor (ADGR) subfamily. Homodimer; disulfide-linked. Heterodimer of 2 chains generated by proteolytic processing; the large extracellular N-terminal fragment and the membrane-bound C-terminal fragment predominantly remain associated and non-covalently linked. Fragment generates by the processing enzyme furin remains attached to the extracellular N-terminal fragment. Interacts (via N-terminal extracellular domain) with SFTPD. In terms of processing, highly glycosylated. Proteolytically cleaved at multiple sites: one in the GPS region of the GAIN-B domain (S1 site) and the other in the SEA domain (S2 site). The proteolytic cleavage at S1 site generates an extracellular subunit and a seven-transmembrane subunit. The proteolytic cleavage at S2 site generates a fragment that undergoes proteolytic cleavage by the processing enzyme furin. In terms of tissue distribution, widely expressed, with highest levels in lung, pancreas, kidney and heart. In the kidney, expressed more abundantly in the medulla than in the cortex, predominantly expressed in A-intercalated cells (at protein level). Expressed in endothelial cells from various tissues, including brain, heart, kidney, liver, lung and muscle. In the lung, expressed in alveolar type II (ATII) cells (at protein level). Expressed in pancreatic islets of Langerhans, predominantly in delta cells, as well as in endothelial cells. Expressed in white adipose tissue.

It is found in the cell membrane. As an adhesion G protein-coupled receptor (aGPCR) exhibits a large N-terminal extracellular domain containing highly conserved GPCR autoproteolysis-inducing (GAIN) domain. During synthesis, intracellular autoproteolytic processing of nascent chain within the GAIN domain generates a mature protein, consisting of an N-terminal fragment that is non-covalently linked to the C-terminal fragment. The mature protein is routed to the plasma membrane where the N- and C-terminal fragments remain associated, forming the holoreceptor. Dissociation of the aGPCR fragments stimulates G protein signaling through the action of the tethered-peptide agonist stalk that is occluded within the GAIN domain in the holoreceptor form. This dissociation might be induced by ligand binding, such as that of sFNDC4. In terms of biological role, adhesion G protein-coupled receptor. In alveolar type II (ATII or AT2) cells, required for normal lung surfactant homeostasis. Modulation of both surfactant secretion and uptake by ATII cells is mediated by the downstream activation of GNAQ/GNA11 proteins and may be a consequence of increased cortical F-actin assembly induced by ADGRF5 activation. In the kidney, may play a role in the regulation of acid excretion into the primary urine, possibly by regulating the surface expression of V-ATPase proton pump. As a receptor for soluble FNDC4 (sFNDC4), required for proper systemic glucose tolerance, specifically sensitizing white adipose tissue to insulin. Also plays a role in sFNDC4-induced decrease of local inflammation in white adipose tissue. The sequence is that of Adhesion G protein-coupled receptor F5 (Adgrf5) from Mus musculus (Mouse).